The chain runs to 775 residues: Zinc finger protein GLIS3 (775 aa).

Disordered regions lie at residues 121 to 147 (TESS…KKRA) and 282 to 314 (PGST…AHLH). Over residues 123–133 (SSHSPYPSPRH) the composition is skewed to low complexity. The span at 134–147 (SSTRSHSARSKKRA) shows a compositional bias: basic residues. Over residues 289 to 307 (PPAPPLPPLPPPPGPPPPY) the composition is skewed to pro residues. Residues 345-370 (HCCRWIDCSALYDQQEELVRHIEKVH) form a C2H2-type 1 zinc finger. The C2H2-type 2; atypical zinc finger occupies 379–406 (FTCFWAGCPRRYKPFNARYKLLIHMRVH). 3 C2H2-type zinc fingers span residues 412 to 436 (NKCT…LRSH), 442 to 466 (YLCQ…QRTH), and 472 to 496 (YACQ…VKAH). Disordered regions lie at residues 485–512 (DPSS…SSTE) and 529–665 (PATS…QPNG). The Bipartite nuclear localization signal signature appears at 491 to 507 (KHVKAHSSKEQQARKKL). Over residues 497 to 512 (SSKEQQARKKLRSSTE) the composition is skewed to basic and acidic residues. Composition is skewed to polar residues over residues 557-567 (IFSSNYSSRSG), 588-600 (VQGS…SQLP), and 632-663 (SILQ…SFQP).

The protein belongs to the GLI C2H2-type zinc-finger protein family. As to expression, in the adult, expressed at high levels in the kidney and at lower levels in the brain, skeletal muscle, pancreas, liver, lung, thymus and ovary.

Its subcellular location is the nucleus. Acts both as a repressor and an activator of transcription. Binds to the consensus sequence 5'-GACCACCCAC-3'. The sequence is that of Zinc finger protein GLIS3 (GLIS3) from Homo sapiens (Human).